Reading from the N-terminus, the 564-residue chain is Homeobox protein unc-62 (564 aa).

Disordered regions lie at residues 40-59, 216-270, 293-313, 328-397, and 455-503; these read NEQF…ADPA, ERAS…VMGG, SSSS…LHST, PSTC…KVPK, and IDQN…PSSL. One can recognise an MEIS N-terminal domain in the interval 133–218; sequence SSDVCSSASF…PLDIVGDERA (86 aa). The segment covering 219 to 230 has biased composition (low complexity); it reads SSSQPPMSPGSM. 2 stretches are compositionally biased toward polar residues: residues 328 to 344 and 381 to 390; these read PSTC…TPLS and LSDSANGSQN. Residues 392–454 constitute a DNA-binding region (homeobox; TALE-type); it reads KRKVPKVFSK…NARRRIVQPM (63 aa). Composition is skewed to polar residues over residues 455-469 and 494-503; these read IDQN…QMNV and ANYSPDPSSL.

This sequence belongs to the TALE/MEIS homeobox family. As to quaternary structure, forms a heterodimer with homeobox ceh-60.

The protein resides in the nucleus. In terms of biological role, acts redundantly with ceh-20 and ceh-40 to perform overlapping roles during embryogenesis. Required for postembryonic development of the ectoderm, including the Q, V and P cell lineages, playing a crucial role in ensuring that these cells and their descendants undergo their invariant patterns of cell division, migration, fusion and morphogenesis. Has a role in the mig-13 pathway to promote anterior migration of neuroblasts in the Q lineage. Required for multiple roles in regulating vulva development. Associates with homeobox ceh-60 to regulate gene expression, including repression of genes involved in innate immunity and activation of genes involved in vitellogenesis. Involved in lipid homeostasis, contributing to the formation of the cuticle. In Caenorhabditis elegans, this protein is Homeobox protein unc-62 (unc-62).